The sequence spans 393 residues: MYQIGEALVGDGAELAHIDLIIGEKSGPVGIAFANGLSQLSAGHTPLLAVIRPNLLTKPATLIIPKVTLKNQTQVTEMFGPVQAAIAKGIADCIEEGTFKEYDIEDLVILASVYLAPEAKDYNKIYRYNYGAIKLALNRALEGFPPEKTILYEKDRGAHAVMGFKVQRLWDAPYLQVAMDLVDMGKVAKVLKEVPDNDHVIIEAGTPLIKRFGLSVISEIRKLRPNAFIIADMKILDTGNLESRMAADASADAVVISGLAPASTIEKAIEETKKTGIYSIIDMLNVPNPVELIASLKIKPDIVELHRAIDCETSCHAWGDIVAIKKAAGGKLLVATAGGVRVEVVKEALASGADILVVGRAITASKDIRHATEEFLEQLHKDEIDQFRVMTDF.

Residues M1–V161 form a formaldehyde-activating enzyme region. H17 acts as the Proton donor in catalysis. Residues D19, L48, K66, T68, and Q83 each coordinate substrate. A 3-hexulose-6-phosphate synthase region spans residues M162–F393.

The protein in the N-terminal section; belongs to the formaldehyde-activating enzyme family. In the C-terminal section; belongs to the HPS/KGPDC family. HPS subfamily.

The enzyme catalyses 5,6,7,8-tetrahydromethanopterin + formaldehyde = 5,10-methylenetetrahydromethanopterin + H2O. It catalyses the reaction D-ribulose 5-phosphate + formaldehyde = D-arabino-hex-3-ulose 6-phosphate. It functions in the pathway carbohydrate biosynthesis; D-ribose 5-phosphate biosynthesis. Functionally, catalyzes the condensation of formaldehyde with tetrahydromethanopterin (H(4)MPT) to 5,10-methylenetetrahydromethanopterin. Catalyzes the reversible formation of ribulose-5-phosphate and formaldehyde from 3-hexulose-6-phosphate. This chain is Bifunctional enzyme Fae/Hps, found in Methanosphaerula palustris (strain ATCC BAA-1556 / DSM 19958 / E1-9c).